Consider the following 407-residue polypeptide: Putative replication protein A (407 aa).

This sequence belongs to the ParA family.

In Sinorhizobium fredii (strain NBRC 101917 / NGR234), this protein is Putative replication protein A.